A 224-amino-acid polypeptide reads, in one-letter code: Orotate phosphoribosyltransferase (224 aa).

Lys29 contacts 5-phospho-alpha-D-ribose 1-diphosphate. 37-38 contributes to the orotate binding site; that stretch reads FF. 5-phospho-alpha-D-ribose 1-diphosphate contacts are provided by residues 75–76, Arg105, Lys106, Lys109, His111, and 130–138; these read YK and DDVITAGTS. 2 residues coordinate orotate: Thr134 and Arg162.

It belongs to the purine/pyrimidine phosphoribosyltransferase family. PyrE subfamily. In terms of assembly, homodimer. Requires Mg(2+) as cofactor.

The catalysed reaction is orotidine 5'-phosphate + diphosphate = orotate + 5-phospho-alpha-D-ribose 1-diphosphate. Its pathway is pyrimidine metabolism; UMP biosynthesis via de novo pathway; UMP from orotate: step 1/2. In terms of biological role, catalyzes the transfer of a ribosyl phosphate group from 5-phosphoribose 1-diphosphate to orotate, leading to the formation of orotidine monophosphate (OMP). In Bordetella bronchiseptica (strain ATCC BAA-588 / NCTC 13252 / RB50) (Alcaligenes bronchisepticus), this protein is Orotate phosphoribosyltransferase.